A 246-amino-acid polypeptide reads, in one-letter code: Bromelain inhibitor (246 aa).

The first 19 residues, 1 to 19, serve as a signal peptide directing secretion; it reads MNMLLLFLHEVINGERVTL. Disulfide bonds link cysteine 22-cysteine 42, cysteine 25-cysteine 74, cysteine 27-cysteine 40, cysteine 49-cysteine 56, and cysteine 53-cysteine 65. Positions 31–35 are excised as a propeptide; sequence TSSSD. 2 consecutive propeptides follow at residues 77–95 and 107–111; these read PVSS…RVTL and TSSSD. 5 disulfides stabilise this stretch: cysteine 98-cysteine 118, cysteine 101-cysteine 150, cysteine 103-cysteine 116, cysteine 125-cysteine 132, and cysteine 129-cysteine 141. 2 propeptides span residues 153-171 and 183-187; these read PVSS…RVTL and TSSSD. Disulfide bonds link cysteine 174–cysteine 194, cysteine 177–cysteine 226, cysteine 179–cysteine 192, cysteine 201–cysteine 208, and cysteine 205–cysteine 217. Positions 229–246 are excised as a propeptide; sequence PVSSWEARQKIKLLQGRE.

The protein belongs to the protease inhibitor I67 family. Each inhibitor is composed of two chains, designated A and B linked by three disulfide bonds.

Its function is as follows. Weak inhibitor of cysteine proteinases. This is Bromelain inhibitor from Ananas comosus (Pineapple).